An 837-amino-acid polypeptide reads, in one-letter code: Histone acetyltransferase KAT2A (837 aa).

The tract at residues 1–99 (MAEPSQAPTP…RKAQVRGLPR (99 aa)) is disordered. Alanine 2 is modified (N-acetylalanine). The span at 7 to 51 (APTPAPAAQPRPLQSPAPAPTPTPAPSPASAPIPTPTPAPAPAPA) shows a compositional bias: pro residues. Residues 58–74 (TGTGGPGVGSGGAGSGG) are compositionally biased toward gly residues. Over residues 75 to 87 (DPARPGLSQQQRA) the composition is skewed to low complexity. Positions 88–99 (SQRKAQVRGLPR) are enriched in basic residues. At serine 307 the chain carries Phosphoserine. Residues 407–434 (FSPSMGGGSNSSLSLDSAGAEPMPGEKR) form a disordered region. Low complexity predominate over residues 416–425 (NSSLSLDSAG). Residues 503–656 (VIGNSLTPKA…GATLMECELN (154 aa)) form the N-acetyltransferase domain. Residue lysine 549 is modified to N6-acetyllysine. Glutamate 575 serves as the catalytic Proton donor/acceptor. Acetyl-CoA is bound by residues 579–581 (CAV), 586–592 (QVKGYGT), and tyrosine 617. Succinyl-CoA is bound by residues 579-581 (CAV), 586-592 (QVKGYGT), and tyrosine 617. A loop 3 region spans residues 639-648 (LGYIKDYEGA). Lysine 728 is covalently cross-linked (Glycyl lysine isopeptide (Lys-Gly) (interchain with G-Cter in SUMO2)). The 105-residue stretch at 728-832 (KDPDQLYTTL…KFFYFKLKEG (105 aa)) folds into the Bromo domain. A Phosphothreonine modification is found at threonine 735. Residues lysine 759 and lysine 791 each participate in a glycyl lysine isopeptide (Lys-Gly) (interchain with G-Cter in SUMO2) cross-link.

The protein belongs to the acetyltransferase family. GCN5 subfamily. In terms of assembly, homooligomer; may form a tetramer of homodimers. Interacts with EP300, CREBBP and ADA2. Component of the TFTC-HAT complex, at least composed of TAF5L, TAF6L, TAF3, TADA3L, SUPT3H/SPT3, TAF2/TAFII150, TAF4/TAFII135, TAF5/TAFII100, KAT2A/GCN5L2, TAF10 and TRRAP. Component of the STAGA transcription coactivator-HAT complex, at least composed of SUPT3H, KAT2A, SUPT7L, TAF5L, TAF6L, TADA3L, TAD1L, TAF10, TAF12, TRRAP and TAF9. The STAGA core complex is associated with a subcomplex required for histone deubiquitination composed of ATXN7L3, ENY2 and USP22. Component of the ADA2A-containing complex (ATAC), composed of KAT14, KAT2A, TADA2L, TADA3L, ZZ3, MBIP, WDR5, YEATS2, CCDC101 and DR1. In the complex, it probably interacts directly with KAT14, MBIP and WDR5. Interacts with PML. Interacts with CEBPB. Interacts with TACC1, TACC2 and TACC3. Interacts with RELA. Interacts with NFATC2. Interacts with TBX5. Interacts with PLK4. Associates with the 2-oxoglutarate dehydrogenase complex. Interacts with XPC; leading to KAT2A recruitment to promoters and subsequent acetylation of histones. Interacts with ERCC3/XPB; leading to KAT2A recruitment to promoters and subsequent acetylation of histones. Interacts with ISL1. Interactions of ISL1 with MLIP1 or KAT2A may be mutually exclusive. (Microbial infection) Interacts with and acetylates HIV-1 Tat. Acetylated at Lys-549, inhibiting the protein acetyltransferase activity. Deacetylation at Lys-549 by SIRT6 promotes phosphorylation at Ser-307 and Thr-735 and subsequent activation of the protein acetyltransferase activity, leading to acetylation and inactivation of PPARGC1A. As to expression, expressed in all tissues tested.

Its subcellular location is the nucleus. The protein localises to the chromosome. It localises to the cytoplasm. It is found in the cytoskeleton. The protein resides in the microtubule organizing center. Its subcellular location is the centrosome. The catalysed reaction is L-lysyl-[histone] + acetyl-CoA = N(6)-acetyl-L-lysyl-[histone] + CoA + H(+). It catalyses the reaction L-lysyl-[protein] + acetyl-CoA = N(6)-acetyl-L-lysyl-[protein] + CoA + H(+). The enzyme catalyses succinyl-CoA + L-lysyl-[protein] = N(6)-succinyl-L-lysyl-[protein] + CoA + H(+). It carries out the reaction glutaryl-CoA + L-lysyl-[protein] = N(6)-glutaryl-L-lysyl-[protein] + CoA + H(+). Its function is as follows. Protein lysine acyltransferase that can act as a acetyltransferase, glutaryltransferase, succinyltransferase or malonyltransferase, depending on the context. Acts as a histone lysine succinyltransferase: catalyzes succinylation of histone H3 on 'Lys-79' (H3K79succ), with a maximum frequency around the transcription start sites of genes. Succinylation of histones gives a specific tag for epigenetic transcription activation. Association with the 2-oxoglutarate dehydrogenase complex, which provides succinyl-CoA, is required for histone succinylation. In different complexes, functions either as an acetyltransferase (HAT) or as a succinyltransferase: in the SAGA and ATAC complexes, acts as a histone acetyltransferase. Has significant histone acetyltransferase activity with core histones, but not with nucleosome core particles. Has a a strong preference for acetylation of H3 at 'Lys-9' (H3K9ac). Acetylation of histones gives a specific tag for epigenetic transcription activation. Recruited by the XPC complex at promoters, where it specifically mediates acetylation of histone variant H2A.Z.1/H2A.Z, thereby promoting expression of target genes. Involved in long-term memory consolidation and synaptic plasticity: acts by promoting expression of a hippocampal gene expression network linked to neuroactive receptor signaling. Acts as a positive regulator of T-cell activation: upon TCR stimulation, recruited to the IL2 promoter following interaction with NFATC2 and catalyzes acetylation of histone H3 at 'Lys-9' (H3K9ac), leading to promote IL2 expression. Required for growth and differentiation of craniofacial cartilage and bone by regulating acetylation of histone H3 at 'Lys-9' (H3K9ac). Regulates embryonic stem cell (ESC) pluripotency and differentiation. Also acetylates non-histone proteins, such as CEBPB, MRE11, PPARGC1A, PLK4 and TBX5. Involved in heart and limb development by mediating acetylation of TBX5, acetylation regulating nucleocytoplasmic shuttling of TBX5. Acts as a negative regulator of centrosome amplification by mediating acetylation of PLK4. Acts as a negative regulator of gluconeogenesis by mediating acetylation and subsequent inactivation of PPARGC1A. Also acts as a histone glutaryltransferase: catalyzes glutarylation of histone H4 on 'Lys-91' (H4K91glu), a mark that destabilizes nucleosomes by promoting dissociation of the H2A-H2B dimers from nucleosomes. In terms of biological role, (Microbial infection) In case of HIV-1 infection, it is recruited by the viral protein Tat. Regulates Tat's transactivating activity and may help inducing chromatin remodeling of proviral genes. This chain is Histone acetyltransferase KAT2A, found in Homo sapiens (Human).